A 502-amino-acid polypeptide reads, in one-letter code: Keratin, type II microfibrillar, component 5 (502 aa).

Ser1 is subject to Blocked amino end (Ser). Positions 1–122 are head; it reads SCRSYRISPG…PNAQCVKHQE (122 aa). The region spanning 122-433 is the IF rod domain; that stretch reads EKEQIKNLNS…RLLEGEEQRL (312 aa). Residues 123 to 157 are coil 1A; that stretch reads KEQIKNLNSRFAAFIDKVRFLEQQNKLLETKWQFY. Residues 158-167 are linker 1; it reads QNQRCCESNL. The coil 1B stretch occupies residues 168–268; it reads EPLFNGYIET…YDEEIQILNA (101 aa). Lys228 is covalently cross-linked (Glycyl lysine isopeptide (Lys-Gly) (interchain with G-Cter in SUMO1)). A linker 12 region spans residues 269 to 285; sequence HISDTSVIVKMDNSRDL. The tract at residues 286 to 429 is coil 2; that stretch reads NMDCVVAEIK…ATYRRLLEGE (144 aa). The interval 430-502 is tail; the sequence is EQRLCEGVGS…CGSSRSVRFA (73 aa).

It belongs to the intermediate filament family. Hard keratin wool.

Its function is as follows. Wool microfibrillar keratin. The polypeptide is Keratin, type II microfibrillar, component 5 (Ovis aries (Sheep)).